The following is a 568-amino-acid chain: Oxygen-dependent choline dehydrogenase (568 aa).

An FAD-binding site is contributed by 8–37 (DYIIIGAGSAGNTLAARLTEDAGVTVLLLE). The active-site Proton acceptor is the histidine 477.

This sequence belongs to the GMC oxidoreductase family. It depends on FAD as a cofactor.

The catalysed reaction is choline + A = betaine aldehyde + AH2. The enzyme catalyses betaine aldehyde + NAD(+) + H2O = glycine betaine + NADH + 2 H(+). It functions in the pathway amine and polyamine biosynthesis; betaine biosynthesis via choline pathway; betaine aldehyde from choline (cytochrome c reductase route): step 1/1. Involved in the biosynthesis of the osmoprotectant glycine betaine. Catalyzes the oxidation of choline to betaine aldehyde and betaine aldehyde to glycine betaine at the same rate. In Pseudomonas syringae pv. syringae (strain B728a), this protein is Oxygen-dependent choline dehydrogenase.